The chain runs to 515 residues: G-protein coupled receptor 176 (515 aa).

Polar residues predominate over residues 1 to 16 (MGHNGSWISPNASEPH). Residues 1–20 (MGHNGSWISPNASEPHNASG) form a disordered region. At 1–42 (MGHNGSWISPNASEPHNASGAEAAGVNRSALGEFGEAQLYRQ) the chain is on the extracellular side. Residues Asn-4, Asn-11, Asn-17, and Asn-27 are each glycosylated (N-linked (GlcNAc...) asparagine). The helical transmembrane segment at 43-63 (FTTTVQVVIFIGSLLGNFMVL) threads the bilayer. Residues 64–82 (WSTCRTTVFKSVTNRFIKN) are Cytoplasmic-facing. Residues 83 to 103 (LACSGICASLVCVPFDIILST) form a helical membrane-spanning segment. Over 104–118 (SPHCCWWIYTMLFCK) the chain is Extracellular. A helical transmembrane segment spans residues 119 to 139 (VVKFLHKVFCSVTILSFPAIA). The Cytoplasmic segment spans residues 140–160 (LDRYYSVLYPLERKISDAKSR). A helical membrane pass occupies residues 161–181 (ELVMYIWAHAVVASVPVFAVT). Residues 182–207 (NVADIYATSTCTEVWSNSLGHLVYVL) lie on the Extracellular side of the membrane. Residues 208–228 (VYNITTVIVPVVVVFLFLILI) traverse the membrane as a helical segment. At 229 to 267 (RRALSASQKKKVIIAALRTPQNTISIPYASQREAELHAT) the chain is on the cytoplasmic side. A helical membrane pass occupies residues 268–288 (LLSMVMVFILCSVPYATLVVY). Topologically, residues 289–299 (QTVLNVPDTSV) are extracellular. A helical membrane pass occupies residues 300–320 (FLLLTAVWLPKVSLLANPVLF). Residues 321–515 (LTVNKSVRKC…KVSIFPKVDS (195 aa)) are Cytoplasmic-facing.

This sequence belongs to the G-protein coupled receptor 1 family.

It is found in the cell membrane. Functionally, orphan receptor involved in normal circadian rhythm behavior. Acts through the G-protein subclass G(z)-alpha and has an agonist-independent basal activity to repress cAMP production. The polypeptide is G-protein coupled receptor 176 (GPR176) (Homo sapiens (Human)).